Here is a 388-residue protein sequence, read N- to C-terminus: Succinate--CoA ligase [ADP-forming] subunit beta (388 aa).

In terms of domain architecture, ATP-grasp spans 9-245 (KELLASYGLP…KSQENERELK (237 aa)). ATP is bound by residues Lys46, 53 to 55 (GRG), Glu100, Tyr103, and Glu108. Mg(2+)-binding residues include Asn200 and Asp214. Substrate is bound by residues Asn265 and 322–324 (GIV).

It belongs to the succinate/malate CoA ligase beta subunit family. In terms of assembly, heterotetramer of two alpha and two beta subunits. It depends on Mg(2+) as a cofactor.

The enzyme catalyses succinate + ATP + CoA = succinyl-CoA + ADP + phosphate. The catalysed reaction is GTP + succinate + CoA = succinyl-CoA + GDP + phosphate. The protein operates within carbohydrate metabolism; tricarboxylic acid cycle; succinate from succinyl-CoA (ligase route): step 1/1. Succinyl-CoA synthetase functions in the citric acid cycle (TCA), coupling the hydrolysis of succinyl-CoA to the synthesis of either ATP or GTP and thus represents the only step of substrate-level phosphorylation in the TCA. The beta subunit provides nucleotide specificity of the enzyme and binds the substrate succinate, while the binding sites for coenzyme A and phosphate are found in the alpha subunit. In Neisseria gonorrhoeae (strain ATCC 700825 / FA 1090), this protein is Succinate--CoA ligase [ADP-forming] subunit beta.